The following is a 648-amino-acid chain: PTS system N-acetylglucosamine-specific EIICBA component (648 aa).

Methionine 1 bears the N-formylmethionine mark. Residues 1–371 enclose the PTS EIIC type-1 domain; that stretch reads MNILGFFQRL…FNLKTPGRED (371 aa). 12 helical membrane passes run 16–36, 38–58, 70–90, 92–112, 132–152, 159–179, 192–212, 232–252, 260–280, 282–302, 303–323, and 339–359; these read LPIA…PDLL, VAFI…IFAI, GAAA…MVTI, PEIN…GAAY, FVPI…GYVW, IHAG…IFGF, VLNT…GTVF, GFFP…YFAA, VGGM…TEPL, FLFM…TGIS, LFVA…GAID, and MLLV…SLVI. In terms of domain architecture, PTS EIIB type-1 spans 390-472; that stretch reads TQLATNYIAA…KKVVARGPVA (83 aa). The Phosphocysteine intermediate; for EIIB activity role is filled by cysteine 412. Cysteine 412 is modified (phosphocysteine; by EIIA). The PTS EIIA type-1 domain maps to 517 to 621; that stretch reads DEAFASKAVG…SMISPVVCSN (105 aa). Zn(2+)-binding residues include histidine 554 and histidine 569. Histidine 569 serves as the catalytic Tele-phosphohistidine intermediate; for EIIA activity. A Phosphohistidine; by HPr modification is found at histidine 569.

The cofactor is Zn(2+). In terms of processing, 60% of isolated protein was N-formylated.

It localises to the cell inner membrane. It carries out the reaction N(pros)-phospho-L-histidyl-[protein] + N-acetyl-D-glucosamine(out) = N-acetyl-D-glucosamine 6-phosphate(in) + L-histidyl-[protein]. With respect to regulation, P-chloromercuribenzoate inhibits the accumulation of both N-acetyl-D-glucosamine and antibiotic streptozotocin (2-deoxy-2-(3-methyl-3-nitrosoureido)-D-glucopyranose). N-acetyl-D-glucosamine is a competitive inhibitor for the uptake of streptozotocin. In terms of biological role, the phosphoenolpyruvate-dependent sugar phosphotransferase system (sugar PTS), a major carbohydrate active transport system, catalyzes the phosphorylation of incoming sugar substrates concomitantly with their translocation across the cell membrane. This system is involved in N-acetylglucosamine transport. It can also transport and phosphorylate the antibiotic streptozotocin. Could play a significant role in the recycling of peptidoglycan. This chain is PTS system N-acetylglucosamine-specific EIICBA component, found in Escherichia coli (strain K12).